The sequence spans 214 residues: Pyridoxine/pyridoxamine 5'-phosphate oxidase (214 aa).

Substrate is bound by residues 9–12 and lysine 67; that span reads RKSY. FMN-binding positions include 62–67, 77–78, arginine 83, lysine 84, and glutamine 106; these read RIVLLK and YT. Residues tyrosine 124, arginine 128, and serine 132 each coordinate substrate. Residues 141–142 and tryptophan 186 contribute to the FMN site; that span reads QS. 192 to 194 provides a ligand contact to substrate; the sequence is RLH. Residue arginine 196 coordinates FMN.

This sequence belongs to the pyridoxamine 5'-phosphate oxidase family. As to quaternary structure, homodimer. Requires FMN as cofactor.

The catalysed reaction is pyridoxamine 5'-phosphate + O2 + H2O = pyridoxal 5'-phosphate + H2O2 + NH4(+). It catalyses the reaction pyridoxine 5'-phosphate + O2 = pyridoxal 5'-phosphate + H2O2. It participates in cofactor metabolism; pyridoxal 5'-phosphate salvage; pyridoxal 5'-phosphate from pyridoxamine 5'-phosphate: step 1/1. Its pathway is cofactor metabolism; pyridoxal 5'-phosphate salvage; pyridoxal 5'-phosphate from pyridoxine 5'-phosphate: step 1/1. In terms of biological role, catalyzes the oxidation of either pyridoxine 5'-phosphate (PNP) or pyridoxamine 5'-phosphate (PMP) into pyridoxal 5'-phosphate (PLP). The protein is Pyridoxine/pyridoxamine 5'-phosphate oxidase of Leptospira interrogans serogroup Icterohaemorrhagiae serovar copenhageni (strain Fiocruz L1-130).